Consider the following 512-residue polypeptide: Glutamyl-tRNA(Gln) amidotransferase subunit A (512 aa).

Catalysis depends on charge relay system residues Lys-82 and Ser-157. The active-site Acyl-ester intermediate is the Ser-181.

Belongs to the amidase family. GatA subfamily. As to quaternary structure, heterotrimer of A, B and C subunits.

It carries out the reaction L-glutamyl-tRNA(Gln) + L-glutamine + ATP + H2O = L-glutaminyl-tRNA(Gln) + L-glutamate + ADP + phosphate + H(+). In terms of biological role, allows the formation of correctly charged Gln-tRNA(Gln) through the transamidation of misacylated Glu-tRNA(Gln) in organisms which lack glutaminyl-tRNA synthetase. The reaction takes place in the presence of glutamine and ATP through an activated gamma-phospho-Glu-tRNA(Gln). This is Glutamyl-tRNA(Gln) amidotransferase subunit A from Bordetella petrii (strain ATCC BAA-461 / DSM 12804 / CCUG 43448).